A 210-amino-acid polypeptide reads, in one-letter code: Histone H1A (210 aa).

Disordered regions lie at residues 1-49 (MAEA…VSEQ) and 101-210 (KGSG…PKKK). Low complexity-rich tracts occupy residues 26–45 (KKAAAARGAAKSKKPSSGPS) and 129–142 (PLAAEAKKPAAAAK). The H15 domain occupies 42–113 (SGPSVSEQIV…GASGSFKLNK (72 aa)). Composition is skewed to basic residues over residues 143-153 (KTAKSPKKPKK) and 160-180 (SPKKLKKPAKAAKSPAKKTAV). Low complexity predominate over residues 181–192 (KPKVAAKSPAKA). Basic residues predominate over residues 193–210 (KAAKPKVAKAKKAAPKKK).

The protein belongs to the histone H1/H5 family.

It is found in the nucleus. Its subcellular location is the chromosome. Functionally, histones H1 are necessary for the condensation of nucleosome chains into higher-order structures. This Xenopus laevis (African clawed frog) protein is Histone H1A.